The chain runs to 95 residues: Co-chaperonin GroES (95 aa).

Belongs to the GroES chaperonin family. As to quaternary structure, heptamer of 7 subunits arranged in a ring. Interacts with the chaperonin GroEL.

It is found in the cytoplasm. Its function is as follows. Together with the chaperonin GroEL, plays an essential role in assisting protein folding. The GroEL-GroES system forms a nano-cage that allows encapsulation of the non-native substrate proteins and provides a physical environment optimized to promote and accelerate protein folding. GroES binds to the apical surface of the GroEL ring, thereby capping the opening of the GroEL channel. The sequence is that of Co-chaperonin GroES from Rickettsia felis (strain ATCC VR-1525 / URRWXCal2) (Rickettsia azadi).